The chain runs to 627 residues: Hemocyanin B chain (627 aa).

Cu cation-binding residues include His-173, His-177, and His-204. 2 N-linked (GlcNAc...) asparagine glycosylation sites follow: Asn-312 and Asn-316. Cu cation is bound by residues His-324, His-328, and His-364. The cysteines at positions 534 and 582 are disulfide-linked.

Belongs to the tyrosinase family. Hemocyanin subfamily. In terms of assembly, tarantula hemocyanin is a 24-chain polymer with seven different chains identified. In terms of tissue distribution, hemolymph.

The protein localises to the secreted. It is found in the extracellular space. Its function is as follows. Hemocyanins are copper-containing oxygen carriers occurring freely dissolved in the hemolymph of many mollusks and arthropods. The polypeptide is Hemocyanin B chain (HCB) (Aphonopelma sp. (American tarantula)).